Here is a 186-residue protein sequence, read N- to C-terminus: Nucleoside triphosphate pyrophosphatase (186 aa).

Asp68 acts as the Proton acceptor in catalysis.

This sequence belongs to the Maf family. It depends on a divalent metal cation as a cofactor.

It is found in the cytoplasm. It carries out the reaction a ribonucleoside 5'-triphosphate + H2O = a ribonucleoside 5'-phosphate + diphosphate + H(+). It catalyses the reaction a 2'-deoxyribonucleoside 5'-triphosphate + H2O = a 2'-deoxyribonucleoside 5'-phosphate + diphosphate + H(+). Its function is as follows. Nucleoside triphosphate pyrophosphatase. May have a dual role in cell division arrest and in preventing the incorporation of modified nucleotides into cellular nucleic acids. The chain is Nucleoside triphosphate pyrophosphatase from Prochlorococcus marinus (strain MIT 9303).